Reading from the N-terminus, the 583-residue chain is uncharacterized protein (583 aa).

24-140 (ILADIDDEQL…SAMLRAMARM (117 aa)) serves as a coordination point for a nucleoside 3',5'-cyclic phosphate. One can recognise a PNPLA domain in the interval 309 to 469 (LVMAGGGARG…LNNLPANVMC (161 aa)). Residues 313 to 318 (GGGARG) carry the GXGXXG motif. A GXSXG motif is present at residues 340–344 (GTSSG). The active-site Nucleophile is Ser342. Asp456 serves as the catalytic Proton acceptor. Positions 456 to 458 (DGG) match the DGA/G motif.

This sequence belongs to the NTE family.

This is an uncharacterized protein from Mycobacterium bovis (strain ATCC BAA-935 / AF2122/97).